We begin with the raw amino-acid sequence, 506 residues long: Zinc finger protein 157 (506 aa).

One can recognise a KRAB domain in the interval 27–98; the sequence is VSFEDVAVDF…EEESSGHGYS (72 aa). C2H2-type zinc fingers lie at residues 162-184, 190-212, 218-240, 246-268, 274-296, 302-324, 330-352, 358-380, 386-408, 414-436, 442-464, and 470-492; these read FECH…LRIH, YECG…QKTH, FECN…TRTH, YECT…QRTH, YECS…HRTH, YECG…QRIH, YECG…QRTH, YQCN…QRIH, YECN…QRMH, YECS…RRTH, YECS…QRIH, and FECQ…QRTH.

The protein belongs to the krueppel C2H2-type zinc-finger protein family.

The protein resides in the nucleus. In terms of biological role, may be involved in transcriptional regulation. This Homo sapiens (Human) protein is Zinc finger protein 157 (ZNF157).